The following is a 128-amino-acid chain: Glycine cleavage system H protein (128 aa).

A Lipoyl-binding domain is found at 25–107 (TITVGITHHA…YGAGWFFKLK (83 aa)). Lys-66 is modified (N6-lipoyllysine).

Belongs to the GcvH family. The glycine cleavage system is composed of four proteins: P, T, L and H. Requires (R)-lipoate as cofactor.

In terms of biological role, the glycine cleavage system catalyzes the degradation of glycine. The H protein shuttles the methylamine group of glycine from the P protein to the T protein. This chain is Glycine cleavage system H protein, found in Neisseria meningitidis serogroup B (strain ATCC BAA-335 / MC58).